A 4912-amino-acid chain; its full sequence is Probable E3 ubiquitin-protein ligase HERC2 (4912 aa).

The segment at 1–67 is disordered; that stretch reads MFNRQASGGA…GSGSAAPPSH (67 aa). Residues 8–17 show a composition bias toward gly residues; sequence GGAGSSGQGA. Over residues 18–31 the composition is skewed to low complexity; it reads GSSQTASAAPVSAG. 2 stretches are compositionally biased toward gly residues: residues 32 to 41 and 49 to 59; these read VGVGGGGGAS and SAAGSGSGSGS. RCC1 repeat units lie at residues 634 to 685, 686 to 739, 741 to 789, 791 to 843, and 844 to 897; these read NHNA…AITC, GGNL…ALTS, GLVF…ALSS, GQLY…ALSS, and SGEV…VWTQ. Disordered regions lie at residues 1102 to 1129, 1428 to 1475, and 1659 to 1681; these read RLSP…STSP, QLLQ…PGRG, and QEQE…EEET. Positions 1446–1458 are enriched in polar residues; that stretch reads SHSCHSTAGNTPT. Thr-1776 carries the phosphothreonine modification. The 74-residue stretch at 1917–1990 folds into the MIB/HERC2 domain; the sequence is SGPDLAKLMK…QYDLQLADSA (74 aa). Disordered stretches follow at residues 1994 to 2018 and 2381 to 2412; these read ASPT…SHPS and GSIY…SGSG. Positions 2396 to 2412 are enriched in polar residues; the sequence is ESQQPGEQDQQLSSGSG. The UBA domain occupies 2511-2557; the sequence is ATDAQLIGQIMEMGFTRRTVELALKQLSLQAEIMPTPEQIVQWILEH. Positions 2572–2620 are disordered; it reads LASSASSHDPEADSDNECPSSNSTTSSSTSSDTVEGQPMAVSGPAPPVK. The segment covering 2591 to 2604 has biased composition (low complexity); that stretch reads SSNSTTSSSTSSDT. One can recognise a CPH domain in the interval 2624 to 2699; the sequence is RKDFQTADLY…VCFVHIELVE (76 aa). The DOC domain occupies 2780–2958; the sequence is TSATLPSLGD…FLASEYSAGV (179 aa). RCC1 repeat units follow at residues 2985–3036, 3037–3090, 3091–3142, 3144–3194, 3197–3248, 3250–3300, and 3302–3352; these read PCTV…IVSQ, DGKV…ALTL, DGKV…AISS, GELY…TLAL, DGAV…ALTR, GEVW…AVTD, and GQVY…AWGL. Disordered stretches follow at residues 3352–3374 and 3953–4000; these read LPNA…RDPL and LPSS…EQPD. Residues 3974–3988 are compositionally biased toward low complexity; sequence LNSTTSLSSSTVSNV. RCC1 repeat units lie at residues 4049-4099, 4101-4153, 4155-4205, 4207-4259, 4261-4311, 4313-4363, and 4365-4415; these read STIY…AVTP, GKLF…ALTT, GEVY…AITA, GHVL…CITD, DNVW…ALTK, GAVY…ACSD, and GEVY…ALST. One can recognise an HECT domain in the interval 4547 to 4882; that stretch reads ALALPHRVWK…IHFCKSIDTD (336 aa). Cys-4850 functions as the Glycyl thioester intermediate in the catalytic mechanism. The interval 4891-4912 is disordered; sequence EPTEATGSEDNSDLESVASHEG.

Its subcellular location is the cytoplasm. It localises to the cytoskeleton. The protein resides in the microtubule organizing center. It is found in the centrosome. The protein localises to the centriole. It carries out the reaction S-ubiquitinyl-[E2 ubiquitin-conjugating enzyme]-L-cysteine + [acceptor protein]-L-lysine = [E2 ubiquitin-conjugating enzyme]-L-cysteine + N(6)-ubiquitinyl-[acceptor protein]-L-lysine.. The protein operates within protein modification; protein ubiquitination. Its function is as follows. Probable E3 ubiquitin-protein ligase which accepts ubiquitin from an E2 ubiquitin-conjugating enzyme in the form of a thioester and then directly transfers the ubiquitin to targeted substrates. This chain is Probable E3 ubiquitin-protein ligase HERC2 (HERC2), found in Drosophila melanogaster (Fruit fly).